We begin with the raw amino-acid sequence, 457 residues long: Multidrug resistance protein MdtK (457 aa).

12 helical membrane passes run 11 to 31 (LLAL…MGFV), 53 to 73 (IWLP…PVIA), 93 to 113 (WLAG…GYII), 127 to 147 (AVGY…FQVA), 160 to 180 (GMVM…IFIY), 189 to 209 (GGVG…FSMI), 243 to 263 (LPIA…ALLV), 276 to 296 (IALN…AAVT), 314 to 334 (AART…LFTV), 357 to 377 (LMLL…GSGI), 387 to 407 (IFFI…YILA), and 418 to 438 (PAGF…LMML).

The protein belongs to the multi antimicrobial extrusion (MATE) (TC 2.A.66.1) family. MdtK subfamily.

It is found in the cell inner membrane. Functionally, multidrug efflux pump that functions probably as a Na(+)/drug antiporter. This chain is Multidrug resistance protein MdtK, found in Enterobacter sp. (strain 638).